A 63-amino-acid polypeptide reads, in one-letter code: Cecropin (63 aa).

The N-terminal stretch at 1–23 (MNFYKIFVFIALILALSVSQSEA) is a signal peptide. Arginine 62 is modified (arginine amide).

Monomer. As to expression, hemolymph.

Its subcellular location is the secreted. In terms of biological role, cecropins have lytic and antibacterial activity against several Gram-negative bacteria. In Glossina morsitans morsitans (Savannah tsetse fly), this protein is Cecropin.